The sequence spans 95 residues: Integration host factor subunit beta (95 aa).

Positions 57 to 76 (APRTGRNPKTGDKVDLEGKY) are disordered. Basic and acidic residues predominate over residues 65–76 (KTGDKVDLEGKY).

The protein belongs to the bacterial histone-like protein family. In terms of assembly, heterodimer of an alpha and a beta chain.

This protein is one of the two subunits of integration host factor, a specific DNA-binding protein that functions in genetic recombination as well as in transcriptional and translational control. This chain is Integration host factor subunit beta, found in Enterobacter sp. (strain 638).